Here is a 270-residue protein sequence, read N- to C-terminus: 4-hydroxy-tetrahydrodipicolinate reductase (270 aa).

NAD(+) is bound by residues 8–13 (GALGRM), aspartate 34, 102–104 (GTT), and 128–131 (SQNY). The active-site Proton donor/acceptor is the histidine 160. Histidine 161 serves as a coordination point for (S)-2,3,4,5-tetrahydrodipicolinate. Lysine 164 (proton donor) is an active-site residue. 170–171 (GT) provides a ligand contact to (S)-2,3,4,5-tetrahydrodipicolinate.

Belongs to the DapB family.

Its subcellular location is the cytoplasm. The catalysed reaction is (S)-2,3,4,5-tetrahydrodipicolinate + NAD(+) + H2O = (2S,4S)-4-hydroxy-2,3,4,5-tetrahydrodipicolinate + NADH + H(+). It carries out the reaction (S)-2,3,4,5-tetrahydrodipicolinate + NADP(+) + H2O = (2S,4S)-4-hydroxy-2,3,4,5-tetrahydrodipicolinate + NADPH + H(+). It functions in the pathway amino-acid biosynthesis; L-lysine biosynthesis via DAP pathway; (S)-tetrahydrodipicolinate from L-aspartate: step 4/4. In terms of biological role, catalyzes the conversion of 4-hydroxy-tetrahydrodipicolinate (HTPA) to tetrahydrodipicolinate. This chain is 4-hydroxy-tetrahydrodipicolinate reductase, found in Methanococcus vannielii (strain ATCC 35089 / DSM 1224 / JCM 13029 / OCM 148 / SB).